The following is a 447-amino-acid chain: MTVTQEASPKRESLHIIDDRTGSYYSIPIVNNAINASDFKKVTAPEDKAYPANQTENGLRVYDPGYSNTAVSHSKITYIDGLKGTIQYRGYSINDIVGRKTFIDTAHLLIWGHWPSTAEAETLQQRLDQVPVPQDFVFNVIKSFPRDGSLMGMVIAGLSALQSSDMNAIPAHVGKTIYLNNPELADQQIIRVMANMSMLTAAAYCHHIGRDFTPPRAGLSYIENFLLMTGHVEAATGLPNPRYVNAIERLWVLIADHEMTCSTAALLQTASALPDVISCMVSAISALYGPLHGGAIEVAYKNIESIGSISNVPAKIARVKAGKERLYGYGHRVYRVTDPRFVFIREILNELSEEVEKDPLLKVAFEVDRVASEDEYFTSRNLRPNADLFAAFVYKALGFPPEFILPLSILSRTQGFMAHWREAMGNPPRIWRPGQIYTGDLNKSMDE.

Catalysis depends on residues histidine 331 and aspartate 387.

It belongs to the citrate synthase family.

The protein operates within secondary metabolite biosynthesis. Citrate synthase-like protein; part of the gene cluster that mediates the biosynthesis of oryzines, natural products with an unusual maleidride backbone. The two subunits of the fungal fatty acid synthase oryfasA and oryfasB probably form octenoic acid. This fatty acid is most likely activated by the acyl-CoA ligase oryP to give octenyl-CoA before the citrate synthase-like protein oryE catalyzes condensation with oxaloacetate to form tricarboxylic acid. The next steps of the pathways are conjectural, but a favorite possible route has been proposed, beginning with decarboxylation and concomitant dehydration by the decarboxylase oryM, followed by tautomerization, which may lead to the production of a diene intermediate. Reduction of this diene intermediate could give the known metabolite piliformic acid. On the pathway to oryzine B and oryzine A, however, hydroxylation of the diene by the alpha-ketoglutarate-dependent dioxygenase oryG and lactonisation by the lactonohydrolases oryH or oryL could give oryzine B directly. Finally, enoyl reduction by the dehydrogenase oryD would then convert oryzine B into oryzine A. The protein is Citrate synthase-like protein oryE of Aspergillus oryzae (strain ATCC 42149 / RIB 40) (Yellow koji mold).